The chain runs to 596 residues: Arginine--tRNA ligase (596 aa).

Residues 128–138 (ANPTSSLHVGH) carry the 'HIGH' region motif.

The protein belongs to the class-I aminoacyl-tRNA synthetase family. Monomer.

The protein resides in the cytoplasm. The catalysed reaction is tRNA(Arg) + L-arginine + ATP = L-arginyl-tRNA(Arg) + AMP + diphosphate. The polypeptide is Arginine--tRNA ligase (Acinetobacter baumannii (strain AB307-0294)).